The following is a 222-amino-acid chain: Non-structural protein V (222 aa).

Residues 61 to 107 form a disordered region; the sequence is ESTNHQKGSVGGGAKPKKPRPKIAIVPADDKTVPGKPIPNPLLGLDS. Zn(2+) contacts are provided by His171, Cys190, Cys194, Cys206, Cys208, Cys211, Cys215, and Cys218.

This sequence belongs to the paramyxoviruses V protein family. Interacts with host DDB1, STAT2 and IFIH1/MDA5. Interacts with host RIGI regulatory protein (via CARDs domain) and host TRIM25 (via SPRY domain); these interactions prevent TRIM25-mediated ubiquitination of RIG-I and disrupts downstream RIG-I signaling.

The protein localises to the host cytoplasm. Its function is as follows. Plays an essential role in the inhibition of host immune response. Prevents the establishment of cellular antiviral state by blocking interferon-alpha/beta (IFN-alpha/beta) production and signaling pathway. Interacts with host IFIH1/MDA5 and DHX58/LGP2 to inhibit the transduction pathway involved in the activation of IFN-beta promoter, thus protecting the virus against cell antiviral state. Efficiently blocks type I IFN signaling following infection by behaving as a substrate receptor for CUL4-DDB1 E3 ligase complex and targeting host STAT1 for proteasomal degradation. Blocks the type I interferon signaling pathway by disrupting the RIG-I signaling pathway. The polypeptide is Non-structural protein V (P/V) (Parainfluenza virus 5 (strain W3) (PIV5)).